A 411-amino-acid polypeptide reads, in one-letter code: Dual-specificity RNA methyltransferase RlmN (411 aa).

E125 functions as the Proton acceptor in the catalytic mechanism. The region spanning 131-380 is the Radical SAM core domain; the sequence is EEGRGTLCIS…IRTPRGRDIL (250 aa). C138 and C383 are disulfide-bonded. Residues C145, C149, and C152 each coordinate [4Fe-4S] cluster. S-adenosyl-L-methionine contacts are provided by residues 209–210, S241, 263–265, and N340; these read GE and SLH. Catalysis depends on C383, which acts as the S-methylcysteine intermediate.

Belongs to the radical SAM superfamily. RlmN family. It depends on [4Fe-4S] cluster as a cofactor.

It is found in the cytoplasm. The catalysed reaction is adenosine(2503) in 23S rRNA + 2 reduced [2Fe-2S]-[ferredoxin] + 2 S-adenosyl-L-methionine = 2-methyladenosine(2503) in 23S rRNA + 5'-deoxyadenosine + L-methionine + 2 oxidized [2Fe-2S]-[ferredoxin] + S-adenosyl-L-homocysteine. It catalyses the reaction adenosine(37) in tRNA + 2 reduced [2Fe-2S]-[ferredoxin] + 2 S-adenosyl-L-methionine = 2-methyladenosine(37) in tRNA + 5'-deoxyadenosine + L-methionine + 2 oxidized [2Fe-2S]-[ferredoxin] + S-adenosyl-L-homocysteine. In terms of biological role, specifically methylates position 2 of adenine 2503 in 23S rRNA and position 2 of adenine 37 in tRNAs. m2A2503 modification seems to play a crucial role in the proofreading step occurring at the peptidyl transferase center and thus would serve to optimize ribosomal fidelity. This chain is Dual-specificity RNA methyltransferase RlmN, found in Brucella abortus (strain S19).